Consider the following 394-residue polypeptide: Elongation factor Tu (394 aa).

Positions 10–204 constitute a tr-type G domain; it reads KPHVNVGTIG…ALDSYIPEPE (195 aa). Residues 19–26 are G1; that stretch reads GHVDHGKT. 19-26 is a GTP binding site; the sequence is GHVDHGKT. Thr26 contributes to the Mg(2+) binding site. The G2 stretch occupies residues 60 to 64; sequence GITIN. Residues 81 to 84 are G3; sequence DCPG. GTP contacts are provided by residues 81–85 and 136–139; these read DCPGH and NKCD. The interval 136–139 is G4; it reads NKCD. The interval 174–176 is G5; the sequence is SAL.

It belongs to the TRAFAC class translation factor GTPase superfamily. Classic translation factor GTPase family. EF-Tu/EF-1A subfamily. As to quaternary structure, monomer.

The protein localises to the cytoplasm. The enzyme catalyses GTP + H2O = GDP + phosphate + H(+). Its function is as follows. GTP hydrolase that promotes the GTP-dependent binding of aminoacyl-tRNA to the A-site of ribosomes during protein biosynthesis. This chain is Elongation factor Tu, found in Shewanella sp. (strain ANA-3).